We begin with the raw amino-acid sequence, 283 residues long: Probable replication-associated protein repA1 (283 aa).

It belongs to the IncFII RepA family.

Its function is as follows. This protein is essential for plasmid replication; it is involved in copy control functions. This Buchnera aphidicola subsp. Schizaphis graminum (strain Sg) protein is Probable replication-associated protein repA1 (repA1).